The following is a 163-amino-acid chain: Beta-lactoglobulin-2 (163 aa).

2 disulfide bridges follow: Cys-66–Cys-161 and Cys-106–Cys-120.

Belongs to the calycin superfamily. Lipocalin family. Monomer.

Its subcellular location is the secreted. Functionally, lactoglobulin is the primary component of whey, it binds retinol and is probably involved in the transport of that molecule. The sequence is that of Beta-lactoglobulin-2 (LGB2) from Felis catus (Cat).